The following is a 90-amino-acid chain: Probable Fe(2+)-trafficking protein (90 aa).

This sequence belongs to the Fe(2+)-trafficking protein family.

In terms of biological role, could be a mediator in iron transactions between iron acquisition and iron-requiring processes, such as synthesis and/or repair of Fe-S clusters in biosynthetic enzymes. The protein is Probable Fe(2+)-trafficking protein of Aeromonas hydrophila subsp. hydrophila (strain ATCC 7966 / DSM 30187 / BCRC 13018 / CCUG 14551 / JCM 1027 / KCTC 2358 / NCIMB 9240 / NCTC 8049).